Here is a 192-residue protein sequence, read N- to C-terminus: Phosphoheptose isomerase (192 aa).

Residues 35–192 (LIETLENQGK…CIERHFANKN (158 aa)) form the SIS domain. 50–52 (NGG) serves as a coordination point for substrate. Zn(2+) contacts are provided by histidine 59 and glutamate 63. Residues glutamate 63, 92-93 (ND), 118-120 (STS), serine 123, and glutamine 170 contribute to the substrate site. Zn(2+) contacts are provided by glutamine 170 and histidine 178.

This sequence belongs to the SIS family. GmhA subfamily. Homotetramer. It depends on Zn(2+) as a cofactor.

The protein resides in the cytoplasm. It catalyses the reaction 2 D-sedoheptulose 7-phosphate = D-glycero-alpha-D-manno-heptose 7-phosphate + D-glycero-beta-D-manno-heptose 7-phosphate. It functions in the pathway carbohydrate biosynthesis; D-glycero-D-manno-heptose 7-phosphate biosynthesis; D-glycero-alpha-D-manno-heptose 7-phosphate and D-glycero-beta-D-manno-heptose 7-phosphate from sedoheptulose 7-phosphate: step 1/1. Catalyzes the isomerization of sedoheptulose 7-phosphate in D-glycero-D-manno-heptose 7-phosphate. The sequence is that of Phosphoheptose isomerase from Helicobacter pylori (strain Shi470).